Reading from the N-terminus, the 122-residue chain is uncharacterized protein (122 aa).

The protein localises to the mitochondrion. This is an uncharacterized protein from Claviceps purpurea (Ergot fungus).